The primary structure comprises 107 residues: Phosphoribosyl-ATP pyrophosphatase (107 aa).

Belongs to the PRA-PH family.

Its subcellular location is the cytoplasm. The catalysed reaction is 1-(5-phospho-beta-D-ribosyl)-ATP + H2O = 1-(5-phospho-beta-D-ribosyl)-5'-AMP + diphosphate + H(+). Its pathway is amino-acid biosynthesis; L-histidine biosynthesis; L-histidine from 5-phospho-alpha-D-ribose 1-diphosphate: step 2/9. This Caulobacter vibrioides (strain ATCC 19089 / CIP 103742 / CB 15) (Caulobacter crescentus) protein is Phosphoribosyl-ATP pyrophosphatase (hisE).